A 106-amino-acid polypeptide reads, in one-letter code: Large ribosomal subunit protein uL24 (106 aa).

The protein belongs to the universal ribosomal protein uL24 family. Part of the 50S ribosomal subunit.

In terms of biological role, one of two assembly initiator proteins, it binds directly to the 5'-end of the 23S rRNA, where it nucleates assembly of the 50S subunit. Functionally, one of the proteins that surrounds the polypeptide exit tunnel on the outside of the subunit. This is Large ribosomal subunit protein uL24 from Paracidovorax citrulli (strain AAC00-1) (Acidovorax citrulli).